The chain runs to 526 residues: Butyrophilin subfamily 1 member A1 (526 aa).

Residues 1–26 (MAVFPSSGLPRCLLTLILLQLPKLDS) form the signal peptide. Ig-like V-type domains follow at residues 27 to 138 (APFD…ALVH) and 148 to 234 (PHIS…VEIS). The Extracellular portion of the chain corresponds to 27–242 (APFDVIGPPE…ISIPASSLPR (216 aa)). Intrachain disulfides connect Cys-50–Cys-124 and Cys-164–Cys-218. N-linked (GlcNAc...) asparagine glycosylation is found at Asn-55 and Asn-215. Residues 243 to 269 (LTPWIVAVAVILMVLGLLTIGSIFFTW) traverse the membrane as a helical segment. The Cytoplasmic segment spans residues 270-526 (RLYNERPRER…IPTQPSQGAP (257 aa)). Positions 285-479 (SKERLLEELK…LTICPIADGP (195 aa)) constitute a B30.2/SPRY domain. The segment at 495-526 (IPLSPMGEDSAPRDADTLHSKLIPTQPSQGAP) is disordered. Residues 504 to 513 (SAPRDADTLH) show a composition bias toward basic and acidic residues. Residues 517-526 (IPTQPSQGAP) are compositionally biased toward polar residues.

It belongs to the immunoglobulin superfamily. BTN/MOG family. In terms of assembly, seems to associate with xanthine dehydrogenase/oxidase. N-glycosylated.

It is found in the membrane. It localises to the secreted. Functionally, may function in the secretion of milk-fat droplets. May act as a specific membrane-associated receptor for the association of cytoplasmic droplets with the apical plasma membrane. Inhibits the proliferation of CD4 and CD8 T-cells activated by anti-CD3 antibodies, T-cell metabolism and IL2 and IFNG secretion. The chain is Butyrophilin subfamily 1 member A1 (BTN1A1) from Homo sapiens (Human).